A 275-amino-acid polypeptide reads, in one-letter code: Ribosomal RNA small subunit methyltransferase A (275 aa).

The S-adenosyl-L-methionine site is built by Asn19, Leu21, Gly46, Glu71, Asp94, and Asn117.

Belongs to the class I-like SAM-binding methyltransferase superfamily. rRNA adenine N(6)-methyltransferase family. RsmA subfamily.

Its subcellular location is the cytoplasm. The catalysed reaction is adenosine(1518)/adenosine(1519) in 16S rRNA + 4 S-adenosyl-L-methionine = N(6)-dimethyladenosine(1518)/N(6)-dimethyladenosine(1519) in 16S rRNA + 4 S-adenosyl-L-homocysteine + 4 H(+). Its function is as follows. Specifically dimethylates two adjacent adenosines (A1518 and A1519) in the loop of a conserved hairpin near the 3'-end of 16S rRNA in the 30S particle. May play a critical role in biogenesis of 30S subunits. The polypeptide is Ribosomal RNA small subunit methyltransferase A (Burkholderia orbicola (strain MC0-3)).